Here is a 181-residue protein sequence, read N- to C-terminus: Der GTPase-activating protein YihI (181 aa).

Residues 1–73 (MSRIKKARKP…DPRIGSKKPI (73 aa)) are disordered. Basic and acidic residues predominate over residues 22–32 (NRTDRDVESRE). Over residues 33-42 (IKRKRKRKGL) the composition is skewed to basic residues. Positions 55-67 (QARRNAQKKDPRI) are enriched in basic and acidic residues.

The protein belongs to the YihI family. As to quaternary structure, interacts with Der.

Functionally, a GTPase-activating protein (GAP) that modifies Der/EngA GTPase function. May play a role in ribosome biogenesis. In Aliivibrio fischeri (strain ATCC 700601 / ES114) (Vibrio fischeri), this protein is Der GTPase-activating protein YihI.